The following is a 257-amino-acid chain: Snake venom serine protease CL5 (257 aa).

Positions M1–A18 are cleaved as a signal peptide. The propeptide occupies Q19 to L24. One can recognise a Peptidase S1 domain in the interval V25–A248. 5 cysteine pairs are disulfide-bonded: C31–C162, C49–C65, C141–C209, C173–C188, and C199–C224. H64 acts as the Charge relay system in catalysis. Residues N78 and N102 are each glycosylated (N-linked (GlcNAc...) asparagine). D109 serves as the catalytic Charge relay system. N-linked (GlcNAc...) asparagine glycans are attached at residues N153 and N169. The active-site Charge relay system is the S203. N250 carries N-linked (GlcNAc...) asparagine glycosylation.

The protein belongs to the peptidase S1 family. Snake venom subfamily. In terms of assembly, monomer. Expressed by the venom gland.

It is found in the secreted. In terms of biological role, snake venom serine protease that may act in the hemostasis system of the prey. The polypeptide is Snake venom serine protease CL5 (Trimeresurus stejnegeri (Chinese green tree viper)).